A 299-amino-acid chain; its full sequence is Protease HtpX homolog (299 aa).

2 helical membrane-spanning segments follow: residues 15 to 35 (MFLT…VLWQ) and 37 to 57 (GVSY…QYYF). Histidine 140 contacts Zn(2+). Residue glutamate 141 is part of the active site. Histidine 144 contributes to the Zn(2+) binding site. The next 2 membrane-spanning stretches (helical) occupy residues 158–178 (FFAT…GAFG) and 187–207 (NNIM…YFLI). Residue glutamate 215 coordinates Zn(2+).

The protein belongs to the peptidase M48B family. The cofactor is Zn(2+).

It is found in the cell membrane. This Moorella thermoacetica (strain ATCC 39073 / JCM 9320) protein is Protease HtpX homolog.